Here is a 214-residue protein sequence, read N- to C-terminus: tRNA (guanine-N(7)-)-methyltransferase (214 aa).

Glu43, Glu68, Asp95, and Asp117 together coordinate S-adenosyl-L-methionine. Asp117 is a catalytic residue. Residues Lys121, Asp153, and 190–193 (TEYE) contribute to the substrate site.

This sequence belongs to the class I-like SAM-binding methyltransferase superfamily. TrmB family.

The catalysed reaction is guanosine(46) in tRNA + S-adenosyl-L-methionine = N(7)-methylguanosine(46) in tRNA + S-adenosyl-L-homocysteine. Its pathway is tRNA modification; N(7)-methylguanine-tRNA biosynthesis. Catalyzes the formation of N(7)-methylguanine at position 46 (m7G46) in tRNA. In Staphylococcus haemolyticus (strain JCSC1435), this protein is tRNA (guanine-N(7)-)-methyltransferase.